The primary structure comprises 303 residues: Trans-enoyl reductase tazE (303 aa).

The disordered stretch occupies residues Met-1–Glu-26. Cys-44–Arg-49 is an NADP(+) binding site. Position 136–143 (Leu-136–Thr-143) interacts with substrate. NADP(+) is bound by residues Ser-170 to Val-173, Ser-193 to His-196, Tyr-211, and Leu-246 to Asp-247. Val-265–Cys-269 contacts substrate.

This sequence belongs to the zinc-containing alcohol dehydrogenase family.

Its pathway is secondary metabolite biosynthesis. Trans-enoyl reductase; part of the gene cluster that mediates the biosynthesis of azaterrilone A and other azaphilones, a class of fungal metabolites characterized by a highly oxygenated pyrano-quinone bicyclic core and exhibiting a broad range of bioactivities. The first step of the pathway begins with the non-reducing polyketide synthase tazA that assembles one acetyl-CoA starter unit, five malonyl-CoA units, and catalyzes a series of Claisen condensations, methylation, PT-mediated cyclization, and finally releases the first hexaketide precursor through the R-domain. The tazA product then undergoes reduction on its terminal ketone and the following pyran-ring formation by yet undetermined enzyme(s). Dehydration and enoyl reduction, possibly involving the trans-enoyl reductase tazE leads to the next intermediate. TazD is predicted as an acetyltransferase and might catalyze the acetylation steps leading to the synthesis of azaterrilone A. Azaterrilone A is not the final product of the taz pathway and both the highly reducing polyketide synthase tazB and the dual enzyme tazHJ catalyze late steps of the pathway, leading to the production of the 2 final stereoisomers that contain additional polyketide modification whose structures have still to be determined. The sequence is that of Trans-enoyl reductase tazE from Aspergillus terreus (strain NIH 2624 / FGSC A1156).